We begin with the raw amino-acid sequence, 827 residues long: Copper-transporting ATPase 2 (827 aa).

HMA domains follow at residues Val15–Arg80 and Ala82–Arg148. Positions 26, 29, 93, and 96 each coordinate Cu cation. A run of 6 helical transmembrane segments spans residues Val174 to Ile194, Asn210 to Phe230, Ser246 to Pro266, Ser271 to Gly291, Gly430 to Phe450, and Phe458 to Ala478. The active-site 4-aspartylphosphate intermediate is the Asp515. 2 residues coordinate Mg(2+): Asp714 and Asp718. Transmembrane regions (helical) follow at residues Asn771–Val793 and Leu797–Leu819.

The protein belongs to the cation transport ATPase (P-type) (TC 3.A.3) family. Type IB subfamily.

It localises to the cell membrane. It catalyses the reaction Cu(2+)(in) + ATP + H2O = Cu(2+)(out) + ADP + phosphate + H(+). Functionally, involved in copper transport. The polypeptide is Copper-transporting ATPase 2 (actP2) (Rhizobium meliloti (strain 1021) (Ensifer meliloti)).